Here is a 147-residue protein sequence, read N- to C-terminus: Large ribosomal subunit protein uL13 (147 aa).

It belongs to the universal ribosomal protein uL13 family. Part of the 50S ribosomal subunit.

Its function is as follows. This protein is one of the early assembly proteins of the 50S ribosomal subunit, although it is not seen to bind rRNA by itself. It is important during the early stages of 50S assembly. This is Large ribosomal subunit protein uL13 from Latilactobacillus sakei subsp. sakei (strain 23K) (Lactobacillus sakei subsp. sakei).